The chain runs to 262 residues: Homeobox-leucine zipper protein HOX24 (262 aa).

Disordered stretches follow at residues 44-68 and 162-189; these read AAGR…RKRR and LNER…NSVM. Gly residues predominate over residues 46–62; it reads GRGGGDGDGGGGGGGGG. The homeobox DNA-binding region spans 61-122; sequence GGGERKRRFT…NKRARWRSKQ (62 aa). The segment at 121-165 is leucine-zipper; the sequence is KQIEHDYAALRAQYDALHARVESLRQEKLALAAQVDELRGKLNER.

This sequence belongs to the HD-ZIP homeobox family. Class I subfamily. As to expression, expressed in roots and panicles.

It localises to the nucleus. Functionally, probable transcription factor. This is Homeobox-leucine zipper protein HOX24 (HOX24) from Oryza sativa subsp. indica (Rice).